The sequence spans 136 residues: Large ribosomal subunit protein uL16c (136 aa).

Residues 1 to 20 (MLSPKRTRFRKQHRGRMKGK) form a disordered region.

The protein belongs to the universal ribosomal protein uL16 family. In terms of assembly, part of the 50S ribosomal subunit.

Its subcellular location is the plastid. The protein localises to the chloroplast. In Lolium perenne (Perennial ryegrass), this protein is Large ribosomal subunit protein uL16c.